The primary structure comprises 204 residues: Holliday junction branch migration complex subunit RuvA (204 aa).

The segment at 1–64 is domain I; it reads MIGRLQGKLI…EDAHLLFGFS (64 aa). A domain II region spans residues 65 to 143; sequence TKTDRTLFRE…GLRQPDFFVE (79 aa). The segment at 144–155 is flexible linker; it reads SKHITVPDIVSA. Positions 156-204 are domain III; it reads EKETPNDEAVAALVALGYKPPEAAKMVKKVANGDLTSEQLIREALKAAL.

It belongs to the RuvA family. As to quaternary structure, homotetramer. Forms an RuvA(8)-RuvB(12)-Holliday junction (HJ) complex. HJ DNA is sandwiched between 2 RuvA tetramers; dsDNA enters through RuvA and exits via RuvB. An RuvB hexamer assembles on each DNA strand where it exits the tetramer. Each RuvB hexamer is contacted by two RuvA subunits (via domain III) on 2 adjacent RuvB subunits; this complex drives branch migration. In the full resolvosome a probable DNA-RuvA(4)-RuvB(12)-RuvC(2) complex forms which resolves the HJ.

The protein resides in the cytoplasm. In terms of biological role, the RuvA-RuvB-RuvC complex processes Holliday junction (HJ) DNA during genetic recombination and DNA repair, while the RuvA-RuvB complex plays an important role in the rescue of blocked DNA replication forks via replication fork reversal (RFR). RuvA specifically binds to HJ cruciform DNA, conferring on it an open structure. The RuvB hexamer acts as an ATP-dependent pump, pulling dsDNA into and through the RuvAB complex. HJ branch migration allows RuvC to scan DNA until it finds its consensus sequence, where it cleaves and resolves the cruciform DNA. The protein is Holliday junction branch migration complex subunit RuvA of Actinobacillus succinogenes (strain ATCC 55618 / DSM 22257 / CCUG 43843 / 130Z).